The following is a 78-amino-acid chain: Putative capsid protein ORF9 (78 aa).

Residues 1–29 (MIKLVLLVAAIAIFGTGFITVIINQFTSA) form the signal peptide. The helical transmembrane segment at 52–72 (VLFSHPLMLTISSLYIVGFIV) threads the bilayer.

Belongs to the plectrovirus ORF9 family. In terms of assembly, homomultimerizes.

The protein localises to the virion. It is found in the host membrane. May self assemble to form a helical capsid wrapping up the viral genomic DNA. The virion assembly and budding take place at the host inner membrane. This Spiroplasma virus SpV1-C74 (SpV1) protein is Putative capsid protein ORF9.